We begin with the raw amino-acid sequence, 750 residues long: Rho GTPase-activating protein 9 (750 aa).

The SH3 domain maps to 22–88 (PRGSQLCALY…PAAYMIEESI (67 aa)). 2 disordered regions span residues 120 to 187 (ALPS…LMSE) and 242 to 319 (WKPP…LLDD). Positions 163 to 180 (RSLSQEDLPSEASASTAG) are enriched in polar residues. The WW domain maps to 213–247 (LQRLDAWEQHLDPNSGRCFYINSLTGCKSWKPPRR). Polar residues-rich tracts occupy residues 251-270 (ETNP…NDVL) and 291-300 (GSLSLSQRTS). Residues 301 to 317 (QLDPPALQAPRPLPQLL) show a composition bias toward low complexity. The PH domain maps to 322 to 435 (EVEKSGLLNM…WHRALRTVIE (114 aa)). Lipid binding regions lie at residues 342–345 (RKNW), 397–399 (SSR), and 432–669 (TVIE…CLSQ). The span at 446–462 (EAPTGRDQGSGDRENPL) shows a compositional bias: basic and acidic residues. The interval 446–488 (EAPTGRDQGSGDRENPLELRLSGSGPAELSAGEDEEEESELVS) is disordered. S475 carries the post-translational modification Phosphoserine. A compositionally biased stretch (acidic residues) spans 476–485 (AGEDEEEESE). The residue at position 500 (S500) is a Phosphoserine. Residues 542–749 (CQLESLCQRE…LMLTNFTSLF (208 aa)) enclose the Rho-GAP domain.

As to quaternary structure, interacts with FASLG. Predominantly expressed in peripheral blood leukocytes, spleen, and thymus.

In terms of biological role, GTPase activator for the Rho-type GTPases by converting them to an inactive GDP-bound state. Has a substantial GAP activity toward CDC42 and RAC1 and less toward RHOA. Has a role in regulating adhesion of hematopoietic cells to the extracellular matrix. Binds phosphoinositides, and has the highest affinity for phosphatidylinositol 3,4,5-trisphosphate, followed by phosphatidylinositol 3,4-bisphosphate and phosphatidylinositol 4,5-bisphosphate. This is Rho GTPase-activating protein 9 (ARHGAP9) from Homo sapiens (Human).